The chain runs to 411 residues: Heterogeneous nuclear ribonucleoprotein 1 (411 aa).

One can recognise an RRM 1 domain in the interval 6–82 (GKLFVGGISW…REVDVKRAMS (77 aa)). Disordered regions lie at residues 81–103 (MSREEQQVSGRTGNLNTSRSSGG), 183–221 (KRALPKDANPGGGGRSMGGGGSGGYQGYGGNESSYDGRM), and 358–411 (AAYG…RQGQ). Over residues 87 to 101 (QVSGRTGNLNTSRSS) the composition is skewed to polar residues. The region spanning 110 to 187 (KKIFVGGLPP…KQVEVKRALP (78 aa)) is the RRM 2 domain. Composition is skewed to gly residues over residues 192–212 (PGGGGRSMGGGGSGGYQGYGG), 362–387 (VVGGRPSGGGSNNPGSGGYMGGGYGD), and 397–411 (GYGGGYNDGQGRQGQ). The segment at 341-390 (GYGYGGYSGSDSGYGNQAAYGVVGGRPSGGGSNNPGSGGYMGGGYGDGSW) is nuclear targeting sequence (M9).

Component of the spliceosome. Interacts with TRN1.

Its subcellular location is the nucleus. It localises to the cytoplasm. Its function is as follows. Involved with pre-mRNA processing. Forms complexes (ribonucleosomes) with at least 20 other different hnRNP and heterogeneous nuclear RNA in the nucleus. Functionally, involved in the packaging of pre-mRNA into hnRNP particles, transport of poly(A) mRNA from the nucleus to the cytoplasm and may modulate splice site selection. The sequence is that of Heterogeneous nuclear ribonucleoprotein 1 (RNP1) from Arabidopsis thaliana (Mouse-ear cress).